A 146-amino-acid polypeptide reads, in one-letter code: MRSFAIFLLVAIGIFIIDQNIKTLFLEGYYRGGSCIDLSLHFNKGVAFSMFAFIGPYLKWVQALLIGGILYYVLSKGYLKRYAFPAGLLIGGALGNLYDRFVHAGVVDYVAWHCGFNFAVFNFADVAIDLAVAWILIMVYFFPPKA.

3 consecutive transmembrane segments (helical) span residues I6–L26, M50–L70, and Y82–A104. Residues D108 and D125 contribute to the active site. Residues F123–P143 form a helical membrane-spanning segment.

It belongs to the peptidase A8 family.

The protein localises to the cell inner membrane. It catalyses the reaction Release of signal peptides from bacterial membrane prolipoproteins. Hydrolyzes -Xaa-Yaa-Zaa-|-(S,diacylglyceryl)Cys-, in which Xaa is hydrophobic (preferably Leu), and Yaa (Ala or Ser) and Zaa (Gly or Ala) have small, neutral side chains.. The protein operates within protein modification; lipoprotein biosynthesis (signal peptide cleavage). Its function is as follows. This protein specifically catalyzes the removal of signal peptides from prolipoproteins. The chain is Lipoprotein signal peptidase from Sulfurovum sp. (strain NBC37-1).